A 417-amino-acid polypeptide reads, in one-letter code: Gamma-glutamyl phosphate reductase (417 aa).

The protein belongs to the gamma-glutamyl phosphate reductase family.

It is found in the cytoplasm. It catalyses the reaction L-glutamate 5-semialdehyde + phosphate + NADP(+) = L-glutamyl 5-phosphate + NADPH + H(+). It functions in the pathway amino-acid biosynthesis; L-proline biosynthesis; L-glutamate 5-semialdehyde from L-glutamate: step 2/2. Catalyzes the NADPH-dependent reduction of L-glutamate 5-phosphate into L-glutamate 5-semialdehyde and phosphate. The product spontaneously undergoes cyclization to form 1-pyrroline-5-carboxylate. This chain is Gamma-glutamyl phosphate reductase, found in Phocaeicola vulgatus (strain ATCC 8482 / DSM 1447 / JCM 5826 / CCUG 4940 / NBRC 14291 / NCTC 11154) (Bacteroides vulgatus).